The chain runs to 514 residues: Protein p59 (514 aa).

Its subcellular location is the virion. The protein is Protein p59 of Lettuce infectious yellows virus (isolate United States/92) (LIYV).